Here is a 403-residue protein sequence, read N- to C-terminus: Digeranylgeranylglycerophospholipid reductase 1 (403 aa).

FAD contacts are provided by alanine 14, aspartate 33, cysteine 44, alanine 45, glycine 47, arginine 98, valine 122, aspartate 277, glycine 289, and isoleucine 290.

It belongs to the geranylgeranyl reductase family. DGGGPL reductase subfamily. FAD is required as a cofactor.

It catalyses the reaction a 2,3-bis-O-phytanyl-sn-glycerol 1-phospholipid + 8 A = a 2,3-bis-O-(geranylgeranyl)-sn-glycerol 1-phospholipid + 8 AH2. It carries out the reaction 2,3-bis-O-(phytanyl)-sn-glycerol 1-phosphate + 8 A = 2,3-bis-O-(geranylgeranyl)-sn-glycerol 1-phosphate + 8 AH2. The catalysed reaction is CDP-2,3-bis-O-(geranylgeranyl)-sn-glycerol + 8 AH2 = CDP-2,3-bis-O-(phytanyl)-sn-glycerol + 8 A. The enzyme catalyses archaetidylserine + 8 AH2 = 2,3-bis-O-phytanyl-sn-glycero-3-phospho-L-serine + 8 A. Its pathway is membrane lipid metabolism; glycerophospholipid metabolism. Its function is as follows. Is involved in the reduction of 2,3-digeranylgeranylglycerophospholipids (unsaturated archaeols) into 2,3-diphytanylglycerophospholipids (saturated archaeols) in the biosynthesis of archaeal membrane lipids. Catalyzes the formation of archaetidic acid (2,3-di-O-phytanyl-sn-glyceryl phosphate) from 2,3-di-O-geranylgeranylglyceryl phosphate (DGGGP) via the hydrogenation of each double bond of the isoprenoid chains. Is also probably able to reduce double bonds of geranyl groups in CDP-2,3-bis-O-(geranylgeranyl)-sn-glycerol and archaetidylserine, thus acting at various stages in the biosynthesis of archaeal membrane lipids. The polypeptide is Digeranylgeranylglycerophospholipid reductase 1 (Methanosphaera stadtmanae (strain ATCC 43021 / DSM 3091 / JCM 11832 / MCB-3)).